Here is a 167-residue protein sequence, read N- to C-terminus: Ureidoglycolate lyase (167 aa).

This sequence belongs to the ureidoglycolate lyase family. In terms of assembly, homodimer. Ni(2+) is required as a cofactor.

It catalyses the reaction (S)-ureidoglycolate = urea + glyoxylate. It functions in the pathway nitrogen metabolism; (S)-allantoin degradation. In terms of biological role, catalyzes the catabolism of the allantoin degradation intermediate (S)-ureidoglycolate, generating urea and glyoxylate. Involved in the utilization of allantoin as nitrogen source. The sequence is that of Ureidoglycolate lyase from Pseudomonas fluorescens (strain SBW25).